Here is a 224-residue protein sequence, read N- to C-terminus: MASKLTDRQQEILDLIRLTVSRTGFPPTRAEIARALGFRSPNAAEDHLKALARKGAIELTAGASRGIRLKDAGETIPPGPETAASALAGMADAVGRLLLPLVGRVAAGSPILAAEHVEREVGVDVDLFAQTPDYLLKVRGMSMRDAGILEGDLLAVKRAAEARNGQIVVARLGDEVTVKRLQRHQGRIELLPENPDFSPIVVDGTQEFALEGIAVGLIRTQALH.

A DNA-binding region (H-T-H motif) is located at residues 29–49 (RAEIARALGFRSPNAAEDHLK). Catalysis depends on for autocatalytic cleavage activity residues serine 142 and lysine 179.

Belongs to the peptidase S24 family. As to quaternary structure, homodimer.

The enzyme catalyses Hydrolysis of Ala-|-Gly bond in repressor LexA.. In terms of biological role, represses a number of genes involved in the response to DNA damage (SOS response), including recA and lexA. In the presence of single-stranded DNA, RecA interacts with LexA causing an autocatalytic cleavage which disrupts the DNA-binding part of LexA, leading to derepression of the SOS regulon and eventually DNA repair. The polypeptide is LexA repressor (Bordetella petrii (strain ATCC BAA-461 / DSM 12804 / CCUG 43448)).